A 250-amino-acid polypeptide reads, in one-letter code: MAAVQLLAEEGADAAALSALAQRWGLCHDADAVLALVLTPQRLELRKLDEPKLGAIFVDFVGGTLAHRRRFGGGRGEAVAKAVGIKGGYLPDVVDATAGLGRDAFVLASLGCRVRMLERHPAVAALLDDGLQRGYADAEIGPWLRERLTLLHASSIEALATLTPRPEVVYLDPMFPHRQKSALVKKDMRVFQALVGADDDADALLAPARRLATKRVVVKRPDYAPPLAGVATPNATLTKSHRFDIYAPLA.

Residues 102–103, 118–119, 154–155, and aspartate 172 contribute to the S-adenosyl-L-methionine site; these read RD, ER, and SS.

Belongs to the methyltransferase superfamily. RsmJ family.

It localises to the cytoplasm. The enzyme catalyses guanosine(1516) in 16S rRNA + S-adenosyl-L-methionine = N(2)-methylguanosine(1516) in 16S rRNA + S-adenosyl-L-homocysteine + H(+). Its function is as follows. Specifically methylates the guanosine in position 1516 of 16S rRNA. This is Ribosomal RNA small subunit methyltransferase J from Edwardsiella ictaluri (strain 93-146).